The sequence spans 464 residues: MTVVSVEHALAGKIPEGGEVTVRGWVRTLRGSAGLAFINVTDGSCFAPIQVVATDTLPNFDEIKRLTSGCSLIAKGVLVKSQGKGQSFEIQASGVEIVGWVEDPLTYPIQPKPMSPEFLREVAHLRPRTNLFGAVTRIRNCLAQAVHRFFHQNGFNWISTPIITTSDAEGAGQMFRVSSLDMVNLPRTAQGEVDFSRDFFGKETFLTVSGQLNVEAYCLALSKVYTFGPTFRAENSHTTRHLAEFWMIEPEIAFADLAEDARLAEQFLKYLFRAVLDERGDDLAFLAERVDKNAISKLEAFINAPFEQIDYTEAVKLLQNSGKKFDFPVEWGLDLQTEHERWLTEEHIGRPVVVTNYPEHIKAFYMRLNDDGKTVAAMDVLAPGIGEIIGGSQREERLDVLDARMAQFGLDKEHYSWYRDFRRYGSVPHAGFGLGFERLVVYVCGLSNIRDAIPYPRAPGSAEF.

Belongs to the class-II aminoacyl-tRNA synthetase family. In terms of assembly, homodimer.

Its subcellular location is the cytoplasm. The enzyme catalyses tRNA(Asn) + L-asparagine + ATP = L-asparaginyl-tRNA(Asn) + AMP + diphosphate + H(+). In Xanthomonas campestris pv. campestris (strain 8004), this protein is Asparagine--tRNA ligase.